The following is a 533-amino-acid chain: Acetone monooxygenase (methyl acetate-forming) (533 aa).

Residues 43–46 (TWYW), 55–56 (DS), and Tyr-61 each bind FAD. 53–55 (RFD) contacts NADP(+). NADP(+)-binding positions include 183-189 (NGATGIQ), 206-207 (RT), and Trp-492.

Belongs to the FAD-binding monooxygenase family. As to quaternary structure, homotetramer. Requires FAD as cofactor.

It catalyses the reaction acetone + NADPH + O2 + H(+) = methyl acetate + NADP(+) + H2O. Plays an important role in the metabolism of acetone derived from propane oxidation. Catalyzes the oxidation of acetone to methyl acetate. Exhibits high catalytic efficiency towards various linear and cyclic ketones, such as butanone, 2-pentanone, 2-heptanone, 2-octanone, 2-nonanone, 2-decanone, cyclobutanone, cyclopentanone and cyclohexanone. Elicits the highest catalytic efficiency towards butanone and cyclobutanone. Is highly specific for NADPH and cannot use NADH. This Gordonia sp. (strain TY-5) protein is Acetone monooxygenase (methyl acetate-forming).